A 246-amino-acid polypeptide reads, in one-letter code: Ribosome maturation factor RimM (246 aa).

Over residues 1-15 (MKRKQESKGAGEKRQ) the composition is skewed to basic and acidic residues. The segment at 1 to 63 (MKRKQESKGA…NPQFTTPNPD (63 aa)) is disordered. Positions 45 to 54 (VPSPQSPIPN) are enriched in pro residues. Residues 158–239 (GEDEYHVVDL…RIEITPPPGL (82 aa)) enclose the PRC barrel domain.

The protein belongs to the RimM family. Binds ribosomal protein uS19.

The protein localises to the cytoplasm. Functionally, an accessory protein needed during the final step in the assembly of 30S ribosomal subunit, possibly for assembly of the head region. Essential for efficient processing of 16S rRNA. May be needed both before and after RbfA during the maturation of 16S rRNA. It has affinity for free ribosomal 30S subunits but not for 70S ribosomes. This is Ribosome maturation factor RimM from Nostoc sp. (strain PCC 7120 / SAG 25.82 / UTEX 2576).